The sequence spans 293 residues: MFTGSIVALITPMDDNGDVDRASLKSLIDYHVASGTAAIVSVGTTGESATLNHDEHVDVVMQTLELADGRIPVIAGTGANSTSEAISLTQRFNDTGVVGCLTVTPYYNRPMQEGLYQHFKAIAESTDLPQILYNVPSRTGCDMLPPTIARLAKIKNIVAVKEATGNLSRVSQIQVLVDDEDFILLSGDDASGLDFMQLGGKGVISVTANIAAREMVELCALAAQGNFAEGRRLNQRLMPLHQHLFVEANPIPVKWAAKRLGLMANDTMRLPMTPLTDPAKRIVEDALKSAGLL.

T45 contacts pyruvate. Y133 functions as the Proton donor/acceptor in the catalytic mechanism. The active-site Schiff-base intermediate with substrate is the K161. I204 is a pyruvate binding site.

Belongs to the DapA family. As to quaternary structure, homotetramer; dimer of dimers.

Its subcellular location is the cytoplasm. The catalysed reaction is L-aspartate 4-semialdehyde + pyruvate = (2S,4S)-4-hydroxy-2,3,4,5-tetrahydrodipicolinate + H2O + H(+). Its pathway is amino-acid biosynthesis; L-lysine biosynthesis via DAP pathway; (S)-tetrahydrodipicolinate from L-aspartate: step 3/4. In terms of biological role, catalyzes the condensation of (S)-aspartate-beta-semialdehyde [(S)-ASA] and pyruvate to 4-hydroxy-tetrahydrodipicolinate (HTPA). The sequence is that of 4-hydroxy-tetrahydrodipicolinate synthase from Yersinia pseudotuberculosis serotype O:1b (strain IP 31758).